The following is a 128-amino-acid chain: Ribonuclease P protein component (128 aa).

It belongs to the RnpA family. As to quaternary structure, consists of a catalytic RNA component (M1 or rnpB) and a protein subunit.

The enzyme catalyses Endonucleolytic cleavage of RNA, removing 5'-extranucleotides from tRNA precursor.. Its function is as follows. RNaseP catalyzes the removal of the 5'-leader sequence from pre-tRNA to produce the mature 5'-terminus. It can also cleave other RNA substrates such as 4.5S RNA. The protein component plays an auxiliary but essential role in vivo by binding to the 5'-leader sequence and broadening the substrate specificity of the ribozyme. The chain is Ribonuclease P protein component from Mycoplasma genitalium (strain ATCC 33530 / DSM 19775 / NCTC 10195 / G37) (Mycoplasmoides genitalium).